Consider the following 2595-residue polypeptide: Glucosylceramide transporter ABCA12 (2595 aa).

Residues 23–43 (PLWTLVLILWPVIIFIILAIT) traverse the membrane as a helical segment. Positions 109–119 (LKKPSNPKRDS) are enriched in basic and acidic residues. The segment at 109 to 143 (LKKPSNPKRDSNLSLRSTQVPERSHTSLATVPPRP) is disordered. N-linked (GlcNAc...) asparagine glycosylation is found at Asn120, Asn156, Asn174, Asn214, Asn275, Asn331, Asn365, Asn381, Asn410, Asn433, Asn455, Asn526, Asn541, Asn574, Asn605, Asn645, Asn749, Asn773, Asn812, Asn823, Asn854, Asn917, and Asn960. Positions 120-137 (NLSLRSTQVPERSHTSLA) are enriched in polar residues. 3 helical membrane-spanning segments follow: residues 1062–1082 (VSYSLPIVLMVAWVVFIAAFV), 1109–1129 (FAWLIESIGFLLVTIAILIVI), and 1142–1162 (FILFLYFSDYSFSVIAMSYLI). N-linked (GlcNAc...) asparagine glycosylation occurs at Asn1167. 3 consecutive transmembrane segments (helical) span residues 1171–1191 (IAALIGSLIYVIAFFPFIVLV), 1197–1217 (LSYVIKVFMSLLSPTAFSYAS), and 1247–1267 (FGWLCCLILADSFIYFFIAWY). A glycan (N-linked (GlcNAc...) asparagine) is linked at Asn1319. The region spanning 1346–1577 (VALHGVTKIY…FGDGYHLTLT (232 aa)) is the ABC transporter 1 domain. Residue 1378 to 1385 (GPNGAGKT) coordinates ATP. N-linked (GlcNAc...) asparagine glycans are attached at residues Asn1524, Asn1663, Asn1673, Asn1686, Asn1690, and Asn1704. The interval 1672–1703 (SNMSLEHLTQRKVGNPSANGTSTPDDLSVSSS) is disordered. Polar residues predominate over residues 1687-1703 (PSANGTSTPDDLSVSSS). A helical transmembrane segment spans residues 1747 to 1767 (LIAQVILPIVFVATAMGLGTL). Asn1819, Asn1835, Asn1876, Asn1921, and Asn1952 each carry an N-linked (GlcNAc...) asparagine glycan. Helical transmembrane passes span 1979–1999 (ATISSLIDILVALSILMGYSV), 2035–2055 (FIYDMVFYLVPVAFSIGVIAI), 2072–2092 (LLLLLFGYATFSWMYLLAGLF), 2103–2123 (VCVNLFFGINSIVSLSVVYFL), 2143–2163 (IFLIFPQFCFGYGLIELSQQQ), 2187–2207 (GAMFVALVSQGTMFFLLRLLI), and 2270–2290 (IIAVNNISLGIPAGECFGLLG). Positions 2254-2489 (VQLHRLTKTY…FGRGFTVKVH (236 aa)) constitute an ABC transporter 2 domain. Residue 2290–2297 (GVNGAGKT) coordinates ATP. Asn2318, Asn2542, and Asn2547 each carry an N-linked (GlcNAc...) asparagine glycan. A compositionally biased stretch (polar residues) spans 2575–2587 (VDTSSQGSTISVD). The segment at 2575–2595 (VDTSSQGSTISVDSQEDQLDS) is disordered.

The protein belongs to the ABC transporter superfamily. ABCA family. Interacts with NR1H2 and ABCA1; this interaction is required for ABCA1 localization to the cell surface and is necessary for its normal activity and stability. Expressed in a number of other tissues besides skin, including heart, intestine, stomach, and kidney. Expressed mainly in the granular layer of the skin. Expressed in lung. Expressed in alpha and beta cells of pancreatic islets.

It localises to the cytoplasmic vesicle. It is found in the secretory vesicle membrane. Its subcellular location is the golgi apparatus membrane. The enzyme catalyses ATP + H2O + phospholipidSide 1 = ADP + phosphate + phospholipidSide 2.. It carries out the reaction a beta-D-glucosylceramide(in) + ATP + H2O = a beta-D-glucosylceramide(out) + ADP + phosphate + H(+). Functionally, transports lipids such as glucosylceramides from the outer to the inner leaflet of lamellar granules (LGs) membrane, whereby the lipids are finally transported to the keratinocyte periphery via the trans-Golgi network and LGs and released to the apical surface of the granular keratinocytes to form lipid lamellae in the stratum corneum of the epidermis, which is essential for skin barrier function. In the meantime, participates in the transport of the lamellar granules-associated proteolytic enzymes, in turn regulates desquamation and keratinocyte differentiation. Furthermore, is essential for the regulation of cellular cholesterol homeostasis by regulating ABCA1-dependent cholesterol efflux from macrophages through interaction with NR1H2 and ABCA1. Plays pleiotropic roles in regulating glucose stimulated insulin secretion from beta cells, regulating the morphology and fusion of insulin granules, lipid raft abundance and the actin cytoskeleton. Also involved in lung surfactant biogenesis. In Mus musculus (Mouse), this protein is Glucosylceramide transporter ABCA12.